The chain runs to 513 residues: MQLNAHEISDLIKKQIEGFDFTAEARTEGSVVSVSDGIVRIHGLGDVQFGEMIEFSNNTFGMALNLEQDSVGAVILGDYLHILEGDIVKCTNRLVEVPVGEAMLGRVVNPLGKAIDGKGDIDAQGVRPLEVMAPGVIDRKSVDQPIQTGIKAIDAMVPVGRGQRELIIGDRQTGKTAVAIDAIINQRDSGIRCVYVAIGQKDSSVATVVRKLEEYGALANTIIVVAGAAVSPALQYIAPYAGCAMAEYFRDRGEDVLIVYDDLTKQAWAYREVSLLLKRPPGREAYPGDVFYLHSRLLERASRVNADYVEKMTNGKVKGQTGSLTALPIIETQGGDVSAFVPTNVISITDGQIFLETDLFNAGIRPAINVGLSVSRVGGAAQTNIIKKLGGGIRLDLAQYRELVAFAQFSSDLDVETKAQIDRGQRVTELMKQNQYSPLSIAEMATLLFSANSGLLDDIEVNKIVDFEVSLIAYMKVNQVSLMNRINEIGNYNDKISNELQVAIDDFKTNYTW.

169-176 (GDRQTGKT) contacts ATP.

The protein belongs to the ATPase alpha/beta chains family. As to quaternary structure, F-type ATPases have 2 components, CF(1) - the catalytic core - and CF(0) - the membrane proton channel. CF(1) has five subunits: alpha(3), beta(3), gamma(1), delta(1), epsilon(1). CF(0) has three main subunits: a(1), b(2) and c(9-12). The alpha and beta chains form an alternating ring which encloses part of the gamma chain. CF(1) is attached to CF(0) by a central stalk formed by the gamma and epsilon chains, while a peripheral stalk is formed by the delta and b chains.

It localises to the cell inner membrane. It catalyses the reaction ATP + H2O + 4 H(+)(in) = ADP + phosphate + 5 H(+)(out). Functionally, produces ATP from ADP in the presence of a proton gradient across the membrane. The alpha chain is a regulatory subunit. The sequence is that of ATP synthase subunit alpha from Vesicomyosocius okutanii subsp. Calyptogena okutanii (strain HA).